Consider the following 236-residue polypeptide: MTRRYWNIHLEEMMEAGVHFGHGTRKWNPRMAPYISAKRKGIHIINLTRTARFLSEACDLVFDAATRGKQFLIVGTKNKAADSVARAATRTRCHYVNKKWLGGMLTNWSTTETRLHKFRDLRTEQKTGGLNRLPKRDAAMFKRQLSHLQTYLGGIKYMTGLPDIVIIVDQQEEYRALQECITLGIPTICLIDTNCDPDLADISIPANDDAIASIRLILNKLVFAISEGRSSSIRNS.

Belongs to the universal ribosomal protein uS2 family.

It localises to the plastid. Its subcellular location is the chloroplast. This chain is Small ribosomal subunit protein uS2c (rps2), found in Cucumis sativus (Cucumber).